A 390-amino-acid chain; its full sequence is Delta-aminolevulinic acid dehydratase, chloroplastic (390 aa).

Residues 1–24 (MQMMQRNVVGQRPVAGSRRSLVVA) constitute a chloroplast transit peptide. The tract at residues 34-69 (VSTNGKHRTGVPEGTPIVTPQDLPSRPRRNRRSESF) is disordered. Lys-251 functions as the Schiff-base intermediate with substrate in the catalytic mechanism. Positions 261 and 281 each coordinate 5-aminolevulinate. Glu-297 is a binding site for Mg(2+). Residue Lys-312 is the Schiff-base intermediate with substrate of the active site. 5-aminolevulinate contacts are provided by Ser-338 and Tyr-377.

The protein belongs to the ALAD family. Homooctamer. Mg(2+) is required as a cofactor.

It is found in the plastid. It localises to the chloroplast. The catalysed reaction is 2 5-aminolevulinate = porphobilinogen + 2 H2O + H(+). The protein operates within porphyrin-containing compound metabolism; protoporphyrin-IX biosynthesis; coproporphyrinogen-III from 5-aminolevulinate: step 1/4. Functionally, catalyzes an early step in the biosynthesis of tetrapyrroles. Binds two molecules of 5-aminolevulinate per subunit, each at a distinct site, and catalyzes their condensation to form porphobilinogen. This is Delta-aminolevulinic acid dehydratase, chloroplastic (HEMB) from Chlamydomonas reinhardtii (Chlamydomonas smithii).